Consider the following 275-residue polypeptide: Undecaprenyl-diphosphatase 2 (275 aa).

The next 7 helical transmembrane spans lie at 48 to 68 (NAYV…ALLF), 90 to 110 (GLTL…GLLF), 117 to 137 (IFHV…MIAA), 154 to 174 (ISYK…WPGF), 195 to 215 (ANFT…LSLI), 223 to 243 (ISLL…SLVV), and 254 to 274 (IKLV…LFLF).

Belongs to the UppP family.

It localises to the cell membrane. It catalyses the reaction di-trans,octa-cis-undecaprenyl diphosphate + H2O = di-trans,octa-cis-undecaprenyl phosphate + phosphate + H(+). Its function is as follows. Catalyzes the dephosphorylation of undecaprenyl diphosphate (UPP). Confers resistance to bacitracin. The protein is Undecaprenyl-diphosphatase 2 of Shouchella clausii (strain KSM-K16) (Alkalihalobacillus clausii).